Consider the following 722-residue polypeptide: Golgin subfamily A member 5 (722 aa).

Residues 1-689 are Cytoplasmic-facing; the sequence is MSWFTDLAGR…IFLRRYPIAR (689 aa). Disordered regions lie at residues 90–158 and 194–215; these read TRSS…VKPI and TLSD…SHEL. The span at 91–109 shows a compositional bias: low complexity; it reads RSSIESSHNSSVNVSSHRS. Residues 134–148 are compositionally biased toward basic and acidic residues; it reads DKVHSSSQKETRKES. Residues 149 to 158 are compositionally biased toward polar residues; sequence ASVNQAVKPI. The segment covering 195-209 has biased composition (low complexity); it reads LSDSGSSASLSTTGD. A coiled-coil region spans residues 211 to 622; it reads KSHELSNLRL…LEHQLKNVQG (412 aa). A helical; Anchor for type IV membrane protein membrane pass occupies residues 690–710; the sequence is VFIIIYMALLHLWVMIVLLTY. The Lumenal segment spans residues 711-722; the sequence is TPEMHHDTPSGK.

It is found in the golgi apparatus membrane. Involved in maintaining Golgi structure. Stimulates the formation of Golgi stacks and ribbons. Involved in intra-Golgi retrograde transport. The polypeptide is Golgin subfamily A member 5 (golga5) (Xenopus laevis (African clawed frog)).